A 232-amino-acid polypeptide reads, in one-letter code: uncharacterized protein (232 aa).

The next 5 helical transmembrane spans lie at Leu-4–Glu-24, Val-42–Leu-62, Leu-100–Met-120, Leu-145–Leu-165, and Gly-171–Phe-191.

The protein localises to the cell membrane. This is an uncharacterized protein from Aquifex aeolicus (strain VF5).